The sequence spans 506 residues: Maturase K (506 aa).

The protein belongs to the intron maturase 2 family. MatK subfamily.

The protein localises to the plastid. It is found in the chloroplast. In terms of biological role, usually encoded in the trnK tRNA gene intron. Probably assists in splicing its own and other chloroplast group II introns. The sequence is that of Maturase K from Manihot esculenta (Cassava).